A 127-amino-acid polypeptide reads, in one-letter code: uncharacterized protein (127 aa).

This is an uncharacterized protein from Bacillus subtilis (strain 168).